We begin with the raw amino-acid sequence, 213 residues long: Protein-L-isoaspartate O-methyltransferase (213 aa).

Residue S60 is part of the active site.

Belongs to the methyltransferase superfamily. L-isoaspartyl/D-aspartyl protein methyltransferase family.

It is found in the cytoplasm. It carries out the reaction [protein]-L-isoaspartate + S-adenosyl-L-methionine = [protein]-L-isoaspartate alpha-methyl ester + S-adenosyl-L-homocysteine. Its function is as follows. Catalyzes the methyl esterification of L-isoaspartyl residues in peptides and proteins that result from spontaneous decomposition of normal L-aspartyl and L-asparaginyl residues. It plays a role in the repair and/or degradation of damaged proteins. This chain is Protein-L-isoaspartate O-methyltransferase, found in Roseobacter denitrificans (strain ATCC 33942 / OCh 114) (Erythrobacter sp. (strain OCh 114)).